A 310-amino-acid polypeptide reads, in one-letter code: Olfactory receptor 5W2 (310 aa).

The Extracellular portion of the chain corresponds to 1–25 (MDWENCSSLTDFFLLGITNNPEMKV). An N-linked (GlcNAc...) asparagine glycan is attached at Asn-5. A helical membrane pass occupies residues 26-46 (TLFAVFLAVYIINFSANLGMI). Over 47–54 (VLIRMDYQ) the chain is Cytoplasmic. The chain crosses the membrane as a helical span at residues 55-75 (LHTPMYFFLSHLSFCDLCYST). The Extracellular segment spans residues 76-99 (ATGPKMLVDLLAKNKSIPFYGCAL). A helical membrane pass occupies residues 100-120 (QFLVFCIFADSECLLLSVMAF). Topologically, residues 121–139 (DRYKAIINPLLYTVNMSSR) are cytoplasmic. The chain crosses the membrane as a helical span at residues 140 to 160 (VCYLLLTGVYLVGIADALIHM). The Extracellular portion of the chain corresponds to 161-196 (TLAFRLCFCGSNEINHFFCDIPPLLLLSRSDTQVNE). Residues 197-217 (LVLFTVFGFIELSTISGVFIS) traverse the membrane as a helical segment. The Cytoplasmic segment spans residues 218–237 (YCYIILSVLEIHSAEGRFKA). The chain crosses the membrane as a helical span at residues 238 to 258 (LSTCTSHLSAVAIFQGTLLFM). Topologically, residues 259–271 (YFRPSSSYSLDQD) are extracellular. A helical membrane pass occupies residues 272–292 (KMTSLFYTLVVPMLNPLIYSL). Topologically, residues 293 to 310 (RNKDVKEALKKLKNKILF) are cytoplasmic.

This sequence belongs to the G-protein coupled receptor 1 family.

It localises to the cell membrane. In terms of biological role, odorant receptor. The protein is Olfactory receptor 5W2 (OR5W2) of Homo sapiens (Human).